The following is a 384-amino-acid chain: DNA dC-&gt;dU-editing enzyme APOBEC-3G (384 aa).

Residues 1–60 (MKPHFRNTVERMYRDTFSYNFYNRPILSRRNTVWLCYEVKTKGPSRPPLDAKIFRGQVYS) form an essential for cytoplasmic localization region. Positions 29–138 (RRNTVWLCYE…PDYQEALRSL (110 aa)) constitute a CMP/dCMP-type deaminase 1 domain. Threonine 32 is modified (phosphothreonine; by PKA). (Microbial infection) Glycyl lysine isopeptide (Lys-Gly) (interchain with G-Cter in ubiquitin) cross-links involve residues lysine 42, lysine 52, and lysine 63. Residues histidine 65, cysteine 97, and cysteine 100 each contribute to the Zn(2+) site. (Microbial infection) Glycyl lysine isopeptide (Lys-Gly) (interchain with G-Cter in ubiquitin) cross-links involve residues lysine 150 and lysine 163. A necessary for homooligomerization region spans residues 209 to 336 (EPWVRGRHET…TLAEAGAKIS (128 aa)). Residues 213–215 (RGR) form an interaction with DNA region. Positions 214–328 (GRHETYLCYE…GRCQEGLRTL (115 aa)) constitute a CMP/dCMP-type deaminase 2 domain. Threonine 218 carries the post-translational modification Phosphothreonine; by PKA and CAMK2. Lysine 249 is covalently cross-linked ((Microbial infection) Glycyl lysine isopeptide (Lys-Gly) (interchain with G-Cter in ubiquitin)). Position 257 (histidine 257) interacts with Zn(2+). Glutamate 259 serves as the catalytic Proton donor. Lysine 270 is covalently cross-linked ((Microbial infection) Glycyl lysine isopeptide (Lys-Gly) (interchain with G-Cter in ubiquitin)). Zn(2+)-binding residues include cysteine 288 and cysteine 291. Residues lysine 297, lysine 301, and lysine 303 each participate in a (Microbial infection) Glycyl lysine isopeptide (Lys-Gly) (interchain with G-Cter in ubiquitin) cross-link. The interaction with DNA stretch occupies residues 313 to 320 (RIYDDQGR). Lysine 334 is covalently cross-linked ((Microbial infection) Glycyl lysine isopeptide (Lys-Gly) (interchain with G-Cter in ubiquitin)).

This sequence belongs to the cytidine and deoxycytidylate deaminase family. Homodimer. Homooligomer. Can bind RNA to form ribonucleoprotein complexes of high-molecular-mass (HMM) or low-molecular-mass (LMM). HMM is inactive and heterogeneous in protein composition because of binding nonselectively to cellular RNAs, which in turn are associated with variety of cellular proteins. The LMM form which is enzymatically active has few or no RNAs associated. Its ability to form homooligomer is distinct from its ability to assemble into HMM. Interacts with APOBEC3B, APOBEC3F, MOV10, AGO2, EIF4E, EIF4ENIF1, DCP2 and DDX6 in an RNA-dependent manner. Interacts with AGO1, AGO3 and PKA/PRKACA. As to quaternary structure, (Microbial infection) Interacts with HIV-1 Vif; promoting its ubiquitination by a cullin-5-RING E3 ubiquitin-protein ligase complex (ECS complex) hijacked by the HIV-1 Vif. In terms of assembly, (Microbial infection) Interacts with HIV-1 reverse transcriptase/ribonuclease H. (Microbial infection) Interacts with hepatitis B virus capsid protein. Requires Zn(2+) as cofactor. Post-translationally, (Microbial infection) Following infection by HIV-1, ubiquitinated by a cullin-5-RING E3 ubiquitin-protein ligase complex (ECS complex) hijacked by the HIV-1 Vif protein, leading to its degradation. Deubiquitinated by USP49; leading to stabilization. Phosphorylation at Thr-32 reduces its binding to HIV-1 Vif and subsequent ubiquitination and degradation thus promoting its antiviral activity. Expressed in spleen, testes, ovary and peripheral blood leukocytes and CD4+ lymphocytes. Also expressed in non-permissive peripheral blood mononuclear cells, and several tumor cell lines; no expression detected in permissive lymphoid and non-lymphoid cell lines. Exists only in the LMM form in peripheral blood-derived resting CD4 T-cells and monocytes, both of which are refractory to HIV-1 infection. LMM is converted to a HMM complex when resting CD4 T-cells are activated or when monocytes are induced to differentiate into macrophages. This change correlates with increased susceptibility of these cells to HIV-1 infection.

It is found in the cytoplasm. Its subcellular location is the nucleus. The protein localises to the P-body. It catalyses the reaction a 2'-deoxycytidine in single-stranded DNA + H2O + H(+) = a 2'-deoxyuridine in single-stranded DNA + NH4(+). Its activity is regulated as follows. (Microbial infection) Antiviral activity is neutralized by the HIV-1 virion infectivity factor (Vif), that prevents its incorporation into progeny virions by both inhibiting its translation and/or by inducing its ubiquitination and subsequent degradation by the 26S proteasome. Can also be neutralized by simian immunodeficiency virus sooty mangabey monkey virus (SIV-sm) and chimpanzee immunodeficiency virus (SIV-cpz) Vif. Its function is as follows. DNA deaminase (cytidine deaminase) which acts as an inhibitor of retrovirus replication and retrotransposon mobility via deaminase-dependent and -independent mechanisms. Exhibits potent antiviral activity against Vif-deficient HIV-1. After the penetration of retroviral nucleocapsids into target cells of infection and the initiation of reverse transcription, it can induce the conversion of cytosine to uracil in the minus-sense single-strand viral DNA, leading to G-to-A hypermutations in the subsequent plus-strand viral DNA. The resultant detrimental levels of mutations in the proviral genome, along with a deamination-independent mechanism that works prior to the proviral integration, together exert efficient antiretroviral effects in infected target cells. Selectively targets single-stranded DNA and does not deaminate double-stranded DNA or single- or double-stranded RNA. Exhibits antiviral activity also against simian immunodeficiency viruses (SIVs), hepatitis B virus (HBV), equine infectious anemia virus (EIAV), xenotropic MuLV-related virus (XMRV) and simian foamy virus (SFV). May inhibit the mobility of LTR and non-LTR retrotransposons. The polypeptide is DNA dC-&gt;dU-editing enzyme APOBEC-3G (Homo sapiens (Human)).